Reading from the N-terminus, the 437-residue chain is Diaminopimelate decarboxylase (437 aa).

Residue Lys-81 is modified to N6-(pyridoxal phosphate)lysine. Pyridoxal 5'-phosphate contacts are provided by residues Gly-256 and 298 to 301 (EPGR). Residues Arg-301, Arg-337, and Tyr-341 each coordinate substrate. Residue Cys-366 is the Proton donor of the active site. Residues Glu-367 and Tyr-396 each contribute to the substrate site. Residue Tyr-396 coordinates pyridoxal 5'-phosphate.

This sequence belongs to the Orn/Lys/Arg decarboxylase class-II family. LysA subfamily. Homodimer. Pyridoxal 5'-phosphate serves as cofactor.

It catalyses the reaction meso-2,6-diaminopimelate + H(+) = L-lysine + CO2. It participates in amino-acid biosynthesis; L-lysine biosynthesis via DAP pathway; L-lysine from DL-2,6-diaminopimelate: step 1/1. Its function is as follows. Specifically catalyzes the decarboxylation of meso-diaminopimelate (meso-DAP) to L-lysine. This Actinosynnema pretiosum subsp. auranticum protein is Diaminopimelate decarboxylase.